We begin with the raw amino-acid sequence, 193 residues long: Thymidine kinase (193 aa).

Residues 9–16 and 87–90 contribute to the ATP site; these read STMNAGKS and DEAQ. The Proton acceptor role is filled by Glu88. The Zn(2+) site is built by Cys145, Cys147, Cys182, and His185.

The protein belongs to the thymidine kinase family. As to quaternary structure, homotetramer.

It is found in the cytoplasm. The catalysed reaction is thymidine + ATP = dTMP + ADP + H(+). The chain is Thymidine kinase from Haemophilus influenzae (strain 86-028NP).